Here is a 48-residue protein sequence, read N- to C-terminus: Small, acid-soluble spore protein G (48 aa).

The segment covering 1–16 (MSENRHENEENRRDAA) has biased composition (basic and acidic residues). Residues 1–48 (MSENRHENEENRRDAAVAKVQNSGNAKVVVSVNTDQDQAQAQSQDGED) are disordered. Low complexity predominate over residues 35–48 (DQDQAQAQSQDGED).

This is Small, acid-soluble spore protein G (sspG) from Bacillus subtilis (strain 168).